Consider the following 339-residue polypeptide: F420-dependent glucose-6-phosphate dehydrogenase (339 aa).

Residue aspartate 41 participates in coenzyme F420-(gamma-Glu)n binding. The Proton donor role is filled by histidine 42. Residues threonine 78 and 109–110 contribute to the coenzyme F420-(gamma-Glu)n site; that span reads TG. Glutamate 111 serves as the catalytic Proton acceptor. Coenzyme F420-(gamma-Glu)n-binding positions include asparagine 114, 177–178, and 180–181; these read SG and AA. Residues threonine 195, lysine 198, lysine 259, and arginine 283 each contribute to the substrate site.

This sequence belongs to the F420-dependent glucose-6-phosphate dehydrogenase family. In terms of assembly, homodimer.

It carries out the reaction oxidized coenzyme F420-(gamma-L-Glu)(n) + D-glucose 6-phosphate + H(+) = 6-phospho-D-glucono-1,5-lactone + reduced coenzyme F420-(gamma-L-Glu)(n). Catalyzes the coenzyme F420-dependent oxidation of glucose 6-phosphate (G6P) to 6-phosphogluconolactone. The chain is F420-dependent glucose-6-phosphate dehydrogenase from Nakamurella multipartita (strain ATCC 700099 / DSM 44233 / CIP 104796 / JCM 9543 / NBRC 105858 / Y-104) (Microsphaera multipartita).